The primary structure comprises 286 residues: Nucleotide-binding protein VC0395_A2112/VC395_2645 (286 aa).

8–15 contacts ATP; the sequence is GQSGAGKS. 56 to 59 provides a ligand contact to GTP; the sequence is DIRN.

Belongs to the RapZ-like family.

In terms of biological role, displays ATPase and GTPase activities. The sequence is that of Nucleotide-binding protein VC0395_A2112/VC395_2645 from Vibrio cholerae serotype O1 (strain ATCC 39541 / Classical Ogawa 395 / O395).